The chain runs to 254 residues: DNA repair protein RecO (254 aa).

It belongs to the RecO family.

Functionally, involved in DNA repair and RecF pathway recombination. This is DNA repair protein RecO from Anaeromyxobacter dehalogenans (strain 2CP-C).